The chain runs to 122 residues: MPITKDEIIKALEEMKLNELNELVKAIEDHFGVVASVGVAAAAPAEATNAAPTEVSVVMTSVGQQKVAVIKVVKELTGVGLMDAKKMVDGAMPVTIKEHVKPEEAEEMKAKLVEAGASIDLK.

Belongs to the bacterial ribosomal protein bL12 family. As to quaternary structure, homodimer. Part of the ribosomal stalk of the 50S ribosomal subunit. Forms a multimeric L10(L12)X complex, where L10 forms an elongated spine to which 2 to 4 L12 dimers bind in a sequential fashion. Binds GTP-bound translation factors.

Its function is as follows. Forms part of the ribosomal stalk which helps the ribosome interact with GTP-bound translation factors. Is thus essential for accurate translation. The protein is Large ribosomal subunit protein bL12 of Mycoplasma capricolum subsp. capricolum (strain California kid / ATCC 27343 / NCTC 10154).